The sequence spans 711 residues: Long-chain-fatty-acid--CoA ligase 4 (711 aa).

Residues Leu-8–Ile-28 traverse the membrane as a helical; Signal-anchor for type III membrane protein segment. Topologically, residues Pro-29–Lys-711 are cytoplasmic. The residue at position 447 (Ser-447) is a Phosphoserine.

It belongs to the ATP-dependent AMP-binding enzyme family. Mg(2+) serves as cofactor. Abundant in steroidogenic tissues, also found in the kidney, brain and liver.

The protein resides in the mitochondrion outer membrane. Its subcellular location is the peroxisome membrane. The protein localises to the microsome membrane. It localises to the endoplasmic reticulum membrane. It is found in the cell membrane. It carries out the reaction a long-chain fatty acid + ATP + CoA = a long-chain fatty acyl-CoA + AMP + diphosphate. The enzyme catalyses (5Z,8Z,11Z,14Z)-eicosatetraenoate + ATP + CoA = (5Z,8Z,11Z,14Z)-eicosatetraenoyl-CoA + AMP + diphosphate. The catalysed reaction is 15-hydroxy-(5Z,8Z,11Z,13E)-eicosatetraenoate + ATP + CoA = 15-hydroxy-(5Z,8Z,11Z,13E)-eicosatetraenoyl-CoA + AMP + diphosphate. It catalyses the reaction 12-hydroxy-(5Z,8Z,10E,14Z)-eicosatetraenoate + ATP + CoA = 12-hydroxy-(5Z,8Z,10E,14Z)-eicosatetraenoyl-CoA + AMP + diphosphate. It carries out the reaction 5-hydroxy-(6E,8Z,11Z,14Z)-eicosatetraenoate + ATP + CoA = 5-hydroxy-(6E,8Z,11Z,14Z)-eicosatetraenoyl-CoA + AMP + diphosphate. The enzyme catalyses 5,6-epoxy-(8Z,11Z,14Z)-eicosatrienoate + ATP + CoA = 5,6-epoxy-(8Z,11Z,14Z)-eicosatrienoyl-CoA + AMP + diphosphate. The catalysed reaction is 14,15-epoxy-(5Z,8Z,11Z)-eicosatrienoate + ATP + CoA = 14,15-epoxy-(5Z,8Z,11Z)-eicosatrienoyl-CoA + AMP + diphosphate. It catalyses the reaction 11,12-epoxy-(5Z,8Z,14Z)-eicosatrienoate + ATP + CoA = 11,12-epoxy-(5Z,8Z,14Z)-eicosatrienoyl-CoA + AMP + diphosphate. It carries out the reaction 8,9-epoxy-(5Z,11Z,14Z)-eicosatrienoate + ATP + CoA = 8,9-epoxy-(5Z,11Z,14Z)-eicosatrienoyl-CoA + AMP + diphosphate. The enzyme catalyses hexadecanoate + ATP + CoA = hexadecanoyl-CoA + AMP + diphosphate. The catalysed reaction is (E)-hexadec-2-enoate + ATP + CoA = (2E)-hexadecenoyl-CoA + AMP + diphosphate. Its activity is regulated as follows. Both triacsin C and rosiglitazone inhibit arachidonoyl-CoA ligase activity. Its function is as follows. Catalyzes the conversion of long-chain fatty acids to their active form acyl-CoA for both synthesis of cellular lipids, and degradation via beta-oxidation. Preferentially activates arachidonate and eicosapentaenoate as substrates. Preferentially activates 8,9-EET &gt; 14,15-EET &gt; 5,6-EET &gt; 11,12-EET. Modulates glucose-stimulated insulin secretion by regulating the levels of unesterified EETs. Modulates prostaglandin E2 secretion. In Mus musculus (Mouse), this protein is Long-chain-fatty-acid--CoA ligase 4 (Acsl4).